The following is a 350-amino-acid chain: tRNA uridine(34) hydroxylase (350 aa).

Residues 146-240 (DDPDALFIDM…YARKAREQGL (95 aa)) form the Rhodanese domain. Residue Cys-200 is the Cysteine persulfide intermediate of the active site.

The protein belongs to the TrhO family.

The catalysed reaction is uridine(34) in tRNA + AH2 + O2 = 5-hydroxyuridine(34) in tRNA + A + H2O. In terms of biological role, catalyzes oxygen-dependent 5-hydroxyuridine (ho5U) modification at position 34 in tRNAs, the first step in 5-carboxymethoxyuridine (cmo5U) biosynthesis. May be part of an alternate pathway, which is able to bypass cmo5U biogenesis in a subset of tRNAs under aerobic conditions. In Escherichia coli (strain SMS-3-5 / SECEC), this protein is tRNA uridine(34) hydroxylase.